A 595-amino-acid chain; its full sequence is Isoprene synthase, chloroplastic (595 aa).

A chloroplast-targeting transit peptide spans 1–37; that stretch reads MATELLCLHRPISLTHKLFRNPLPKVIQATPLTLKLR. Asp345 is a dimethylallyl diphosphate binding site. Mg(2+) contacts are provided by Asp345 and Asp349. The DDXXD motif motif lies at 345–349; sequence DDIYD. Positions 423, 486, and 489 each coordinate dimethylallyl diphosphate. Mg(2+)-binding residues include Asn489, Ser493, and Glu497.

It belongs to the terpene synthase family. Tpsb subfamily. In terms of assembly, homodimer. Mg(2+) is required as a cofactor. The cofactor is Mn(2+).

It is found in the plastid. The protein localises to the chloroplast. It carries out the reaction dimethylallyl diphosphate = isoprene + diphosphate. It participates in secondary metabolite biosynthesis; terpenoid biosynthesis. Competitive inhibition is mediated by geranyl diphosphate (GPP). Lyase that catalyzes the formation of isoprene from dimethylallyl diphosphate via a syn-periplanar elimination mechanism in which the diphosphate-leaving group serves as a general base. This is Isoprene synthase, chloroplastic from Populus canescens (Grey poplar).